The primary structure comprises 390 residues: COP9/Signalosome and eIF3 complex-shared subunit 1 (390 aa).

Residues 188-351 (QAAKVMTALL…RTLIVSSYQH (164 aa)) enclose the PCI domain.

This sequence belongs to the eIF-3 subunit M family. Component of the eukaryotic translation initiation factor 3 (eIF-3) complex. Within the eIF-3 complex, interacts directly with eif-3.F. Component of the CSN complex, composed of csn-1, csn-2, csn-3, csn-4, csn-5, csn-6 and csn-7. Within the CSN complex, interacts directly with csn-1 and csn-4.

Its subcellular location is the cytoplasm. Component of the eukaryotic translation initiation factor 3 (eIF-3) complex, which is involved in protein synthesis of a specialized repertoire of mRNAs and, together with other initiation factors, stimulates binding of mRNA and methionyl-tRNAi to the 40S ribosome. The eIF-3 complex specifically targets and initiates translation of a subset of mRNAs involved in cell proliferation (Potential). Component of the COP9 signalosome complex (CSN), a complex involved in various cellular and developmental processes. The CSN complex is an essential regulator of the ubiquitin (Ubl) conjugation pathway by mediating the deneddylation of the cullin subunits of the SCF-type E3 ligase complexes, leading to decrease the Ubl ligase activity of SCF. The CSN complex plays an essential role in embryogenesis and oogenesis and is required to regulate microtubule stability in the early embryo. Mediates mei-1 targeting for degradation at the meiosis to mitosis transition via deneddylation of cul-3. This Caenorhabditis elegans protein is COP9/Signalosome and eIF3 complex-shared subunit 1.